Here is a 149-residue protein sequence, read N- to C-terminus: Transcription antitermination protein NusB (149 aa).

Belongs to the NusB family.

Its function is as follows. Involved in transcription antitermination. Required for transcription of ribosomal RNA (rRNA) genes. Binds specifically to the boxA antiterminator sequence of the ribosomal RNA (rrn) operons. The sequence is that of Transcription antitermination protein NusB from Sphingopyxis alaskensis (strain DSM 13593 / LMG 18877 / RB2256) (Sphingomonas alaskensis).